We begin with the raw amino-acid sequence, 310 residues long: Olfactory receptor 2A7 (310 aa).

Residues 1-24 are Extracellular-facing; sequence MGNNMTLITEFILLGFPLSPRMQM. Asn-4 carries N-linked (GlcNAc...) asparagine glycosylation. A helical transmembrane segment spans residues 25–45; the sequence is LLFALFSLFYAFTLLGNGTIV. Over 46-53 the chain is Cytoplasmic; sequence GLICLDSR. The helical transmembrane segment at 54 to 74 threads the bilayer; it reads LHTPMYFFLSHLAIVDIAYAC. The Extracellular segment spans residues 75 to 96; the sequence is NTVPQMLVNLLDPVKPISYAGC. A disulfide bridge links Cys-96 with Cys-178. The helical transmembrane segment at 97–117 threads the bilayer; the sequence is MTQTFLFLTFAITECLLLVVM. Residues 118-148 lie on the Cytoplasmic side of the membrane; it reads SYDRYVAICHPLRYSAIMSWRVCSTMAVTSW. Residues 149–169 form a helical membrane-spanning segment; sequence IIGVLLSLIHLVLLLPLPFCV. Topologically, residues 170-204 are extracellular; sequence SQKVNHFFCEITAILKLACADTHLNETMVLAGAVS. The N-linked (GlcNAc...) asparagine glycan is linked to Asn-194. Residues 205–225 traverse the membrane as a helical segment; that stretch reads VLVGPFSSIVVSYACILGAIL. At 226 to 239 the chain is on the cytoplasmic side; that stretch reads KIQSEEGQRKAFST. A helical membrane pass occupies residues 240–260; that stretch reads CSSHLCVVGLFYGTAIVMYVG. Over 261–273 the chain is Extracellular; the sequence is PRHGSPKEQKKYL. The chain crosses the membrane as a helical span at residues 274–291; sequence LLFHSLFNPMLNPLIYSL. Over 292-310 the chain is Cytoplasmic; it reads RNSDVKNTLKRVLRTQRAL.

It belongs to the G-protein coupled receptor 1 family. Olfactory epithelium.

The protein resides in the cell membrane. Functionally, odorant receptor. The polypeptide is Olfactory receptor 2A7 (Mus musculus (Mouse)).